An 82-amino-acid chain; its full sequence is DNA-directed RNA polymerase subunit omega (82 aa).

It belongs to the RNA polymerase subunit omega family. The RNAP catalytic core consists of 2 alpha, 1 beta, 1 beta' and 1 omega subunit. When a sigma factor is associated with the core the holoenzyme is formed, which can initiate transcription.

The catalysed reaction is RNA(n) + a ribonucleoside 5'-triphosphate = RNA(n+1) + diphosphate. Functionally, promotes RNA polymerase assembly. Latches the N- and C-terminal regions of the beta' subunit thereby facilitating its interaction with the beta and alpha subunits. In Lachnoclostridium phytofermentans (strain ATCC 700394 / DSM 18823 / ISDg) (Clostridium phytofermentans), this protein is DNA-directed RNA polymerase subunit omega.